Reading from the N-terminus, the 370-residue chain is Galanin receptor type 3 (370 aa).

The Extracellular segment spans residues 1-20; it reads MADIQNISLDSPGSVGAVAV. N-linked (GlcNAc...) asparagine glycosylation is present at asparagine 6. The helical transmembrane segment at 21–41 threads the bilayer; sequence PVVFALIFLLGMVGNGLVLAV. The Cytoplasmic portion of the chain corresponds to 42–57; the sequence is LLQPGPSAWQEPGSTT. Residues 58–78 form a helical membrane-spanning segment; that stretch reads DLFILNLAVADLCFILCCVPF. Residues 79-96 are Extracellular-facing; the sequence is QAAIYTLDAWLFGAFVCK. A disulfide bridge links cysteine 95 with cysteine 172. The chain crosses the membrane as a helical span at residues 97–118; sequence TVHLLIYLTMYASSFTLAAVSV. The Cytoplasmic segment spans residues 119 to 138; sequence DRYLAVRHPLRSRALRTPRN. Residues 139-159 form a helical membrane-spanning segment; the sequence is ARAAVGLVWLLAALFSAPYLS. Topologically, residues 160 to 184 are extracellular; that stretch reads YYGTVRYGALELCVPAWEDARRRAL. The chain crosses the membrane as a helical span at residues 185–205; the sequence is DVATFAAGYLLPVTVVSLAYG. The Cytoplasmic segment spans residues 206-236; sequence RTLCFLWAAVGPAGAAAAEARRRATGRAGRA. Residues 237 to 257 traverse the membrane as a helical segment; that stretch reads MLTVAALYALCWGPHHALILC. Topologically, residues 258-259 are extracellular; the sequence is FW. Residues 260–280 traverse the membrane as a helical segment; that stretch reads YGRFAFSPATYACRLASHCLA. Topologically, residues 281 to 370 are cytoplasmic; it reads YANSCLNPLV…RLTLSARGPQ (90 aa). The S-palmitoyl cysteine moiety is linked to residue cysteine 308. Positions 328-370 are disordered; it reads QPASSGPAGYPGDARPRGWSMEPRGDALRGGETRLTLSARGPQ. The span at 350–359 shows a compositional bias: basic and acidic residues; that stretch reads PRGDALRGGE.

Belongs to the G-protein coupled receptor 1 family.

It is found in the cell membrane. Receptor for the hormone galanin and spexin-1. The sequence is that of Galanin receptor type 3 (Galr3) from Mus musculus (Mouse).